A 418-amino-acid polypeptide reads, in one-letter code: UDP-N-acetylglucosamine 1-carboxyvinyltransferase (418 aa).

Residue 22-23 (KN) participates in phosphoenolpyruvate binding. Arginine 92 is a binding site for UDP-N-acetyl-alpha-D-glucosamine. Cysteine 116 functions as the Proton donor in the catalytic mechanism. Cysteine 116 bears the 2-(S-cysteinyl)pyruvic acid O-phosphothioketal mark. Residues 121-125 (RPIDL), aspartate 305, and leucine 327 each bind UDP-N-acetyl-alpha-D-glucosamine.

It belongs to the EPSP synthase family. MurA subfamily.

It is found in the cytoplasm. The catalysed reaction is phosphoenolpyruvate + UDP-N-acetyl-alpha-D-glucosamine = UDP-N-acetyl-3-O-(1-carboxyvinyl)-alpha-D-glucosamine + phosphate. The protein operates within cell wall biogenesis; peptidoglycan biosynthesis. Functionally, cell wall formation. Adds enolpyruvyl to UDP-N-acetylglucosamine. The polypeptide is UDP-N-acetylglucosamine 1-carboxyvinyltransferase (Campylobacter jejuni (strain RM1221)).